A 594-amino-acid chain; its full sequence is Glomulin (594 aa).

At Ala2 the chain carries N-acetylalanine. An alpha-helical region with structural similarity to HEAT repeats region spans residues 2–553 (AVEELQSIIK…EEIPNMPPEM (552 aa)). The important for interaction with RBX1 stretch occupies residues 300 to 594 (IDQLPMVLSP…STSEENIGIK (295 aa)).

Interacts with FKBP4 and FKBP1A. Isoform 1: Interacts with RBX1 (via RING domain). Identified in complexes that contain RBX1 plus one of the cullins CUL1, CUL2, CUL3, and CUL4A. Identified in a SCF complex composed of CUL1, RBX1, SKP1, FBXW7 and GLMN. Component of a SCF-like complex consisting of CUL7, RBX1, SKP1, FBXW8 and GLMN. Interacts with unphosphorylated MET and is released upon MET phosphorylation. Post-translationally, phosphorylated on tyrosine residues. In terms of tissue distribution, ubiquitous.

Its function is as follows. Regulatory component of cullin-RING-based SCF (SKP1-Cullin-F-box protein) E3 ubiquitin-protein ligase complexes. Inhibits E3 ubiquitin ligase activity by binding to RBX1 (via RING domain) and inhibiting its interaction with the E2 ubiquitin-conjugating enzyme CDC34. Inhibits RBX1-mediated neddylation of CUL1. Required for normal stability and normal cellular levels of key components of SCF ubiquitin ligase complexes, including FBXW7, RBX1, CUL1, CUL2, CUL3, CUL4A, and thereby contributes to the regulation of CCNE1 and MYC levels. Essential for normal development of the vasculature. Contributes to the regulation of RPS6KB1 phosphorylation. In Homo sapiens (Human), this protein is Glomulin (GLMN).